We begin with the raw amino-acid sequence, 791 residues long: GDH/6PGL endoplasmic bifunctional protein (791 aa).

The N-terminal stretch at 1 to 19 (MWNMLIVAMCLALLGCLQA) is a signal peptide. Position 20 is a pyrrolidone carboxylic acid (Q20). Residues 20-526 (QELQGHVSII…SGRLFFSQQQ (507 aa)) form a hexose-6-phosphate dehydrogenase region. NADP(+) is bound by residues 32 to 39 (GATGDLAK) and Y149. N157 carries an N-linked (GlcNAc...) asparagine glycan. K174 contributes to the NADP(+) binding site. Residues K174, 204–208 (HYLGK), E243, and D262 contribute to the D-glucose 6-phosphate site. K208 carries the N6-succinyllysine modification. H267 acts as the Proton acceptor in catalysis. N282 is a glycosylation site (N-linked (GlcNAc...) asparagine). K360 and R365 together coordinate D-glucose 6-phosphate. R370 lines the NADP(+) pocket. Positions 527 to 540 (PEQLVPGPGPAPMP) are linker. The segment at 541-791 (SDFQVLRAKY…WYMDYDAFLG (251 aa)) is 6-phosphogluconolactonase. Residue W617 coordinates NADP(+). N-linked (GlcNAc...) asparagine glycosylation is present at N683.

In the N-terminal section; belongs to the glucose-6-phosphate dehydrogenase family. It in the C-terminal section; belongs to the glucosamine/galactosamine-6-phosphate isomerase family. 6-phosphogluconolactonase subfamily. In terms of assembly, homodimer. As to expression, present in most tissues examined, strongest in liver.

The protein resides in the endoplasmic reticulum lumen. The enzyme catalyses D-glucose 6-phosphate + NADP(+) = 6-phospho-D-glucono-1,5-lactone + NADPH + H(+). The catalysed reaction is D-glucose 6-phosphate + NAD(+) = 6-phospho-D-glucono-1,5-lactone + NADH + H(+). It carries out the reaction 6-phospho-D-glucono-1,5-lactone + H2O = 6-phospho-D-gluconate + H(+). It catalyses the reaction 2-deoxy-D-glucose 6-phosphate + NAD(+) = 2-deoxy-6-phospho-D-glucono-1,5-lactone + NADH + H(+). The enzyme catalyses 2-deoxy-D-glucose 6-phosphate + NADP(+) = 2-deoxy-6-phospho-D-glucono-1,5-lactone + NADPH + H(+). The catalysed reaction is D-galactose 6-phosphate + NADP(+) = 6-phospho-D-galactono-1,5-lactone + NADPH + H(+). It carries out the reaction D-galactose 6-phosphate + NAD(+) = 6-phospho-D-galactono-1,5-lactone + NADH + H(+). It catalyses the reaction D-glucosamine 6-phosphate + NADP(+) = 2-amino-2-deoxy-6-phospho-D-glucono-1,5-lactone + NADPH + 2 H(+). The enzyme catalyses D-glucose + NAD(+) = D-glucono-1,5-lactone + NADH + H(+). The catalysed reaction is D-glucose + NADP(+) = D-glucono-1,5-lactone + NADPH + H(+). It carries out the reaction D-glucose 6-sulfate + NADP(+) = 6-sulfo-D-glucono-1,5-lactone + NADPH + H(+). The protein operates within carbohydrate degradation; pentose phosphate pathway; D-ribulose 5-phosphate from D-glucose 6-phosphate (oxidative stage): step 1/3. It functions in the pathway carbohydrate degradation; pentose phosphate pathway; D-ribulose 5-phosphate from D-glucose 6-phosphate (oxidative stage): step 2/3. It participates in carbohydrate degradation; pentose phosphate pathway; D-ribulose 5-phosphate from D-glucose 6-phosphate (oxidative stage). In terms of biological role, bifunctional enzyme localized in the lumen of the endoplasmic reticulum that catalyzes the first two steps of the oxidative branch of the pentose phosphate pathway/shunt, an alternative to glycolysis and a major source of reducing power and metabolic intermediates for biosynthetic processes. Has a hexose-6-phosphate dehydrogenase activity, with broad substrate specificity compared to glucose-6-phosphate 1-dehydrogenase/G6PD, and catalyzes the first step of the pentose phosphate pathway. In addition, acts as a 6-phosphogluconolactonase and catalyzes the second step of the pentose phosphate pathway. May have a dehydrogenase activity for alternative substrates including glucosamine 6-phosphate and glucose 6-sulfate. The main function of this enzyme is to provide reducing equivalents such as NADPH to maintain the adequate levels of reductive cofactors in the oxidizing environment of the endoplasmic reticulum. By producing NADPH that is needed by reductases of the lumen of the endoplasmic reticulum like corticosteroid 11-beta-dehydrogenase isozyme 1/HSD11B1, indirectly regulates their activity. This chain is GDH/6PGL endoplasmic bifunctional protein, found in Homo sapiens (Human).